The primary structure comprises 50 residues: Kappa-actitoxin-Bcs4a (50 aa).

It belongs to the sea anemone type 5 potassium channel toxin family. Contains 4 disulfide bonds.

It is found in the secreted. The protein localises to the nematocyst. Its function is as follows. Inhibits voltage-gated potassium channels (Kv1/KCNA). Is potent on Drosophila Shaker IR channels (IC(50)=94.25 nM), and rKv1.2/KCNA2 (IC(50)=172.59 nM), and moderately active on hKv1.3/KCNA3 (IC(50)=1006.48 nM), rKv1.6/KCNA6 (IC(50)=2245.93 nM), and Kv1.1/KCNA1 (IC(50) around 3 uM). In vivo, induces a rapid increase in swimming speed on zebrafish larvae, as well as death which occurs between 2 and 18 hours later. Also paralyzes swimming crabs (C.danae) when injected at the junction between the body and the walking leg. The polypeptide is Kappa-actitoxin-Bcs4a (Bunodosoma caissarum (Sea anemone)).